The sequence spans 577 residues: Arginine--tRNA ligase (577 aa).

A 'HIGH' region motif is present at residues 122 to 132 (PNVAKEMHVGH).

The protein belongs to the class-I aminoacyl-tRNA synthetase family. As to quaternary structure, monomer.

The protein resides in the cytoplasm. The enzyme catalyses tRNA(Arg) + L-arginine + ATP = L-arginyl-tRNA(Arg) + AMP + diphosphate. This chain is Arginine--tRNA ligase, found in Salmonella paratyphi B (strain ATCC BAA-1250 / SPB7).